We begin with the raw amino-acid sequence, 357 residues long: DNA replication and repair protein RecF (357 aa).

31 to 38 (GQNGAGKT) contributes to the ATP binding site.

Belongs to the RecF family.

It is found in the cytoplasm. Its function is as follows. The RecF protein is involved in DNA metabolism; it is required for DNA replication and normal SOS inducibility. RecF binds preferentially to single-stranded, linear DNA. It also seems to bind ATP. The sequence is that of DNA replication and repair protein RecF from Coxiella burnetii (strain RSA 493 / Nine Mile phase I).